We begin with the raw amino-acid sequence, 475 residues long: UDP-N-acetylmuramate--L-alanine ligase (475 aa).

112–118 (GTHGKTT) provides a ligand contact to ATP.

Belongs to the MurCDEF family.

It localises to the cytoplasm. The enzyme catalyses UDP-N-acetyl-alpha-D-muramate + L-alanine + ATP = UDP-N-acetyl-alpha-D-muramoyl-L-alanine + ADP + phosphate + H(+). It participates in cell wall biogenesis; peptidoglycan biosynthesis. In terms of biological role, cell wall formation. The chain is UDP-N-acetylmuramate--L-alanine ligase from Methylobacillus flagellatus (strain ATCC 51484 / DSM 6875 / VKM B-1610 / KT).